The primary structure comprises 421 residues: MFSFFRRKKKQETPAPEEAQIQETVAKVESEVAQIVENIKEDAESLAESVKGQVESAVETVSGAVEQVKETVAEMLSEAEEAAEKAAEQVEAAKEAVAETVGEAVGQVQEAVATTEEHKLGWAARLKQGLTKSRDKMAKSLAGVFGGGQIDEDLYEELETVLITSDMDMEATEYLMKDVRDRVSLKGLKDGNELRGALKEALYDLIKPLEKPLVLPETKEPFVIMLAGINGAGKTTSIGKLAKYFQAQGKSVLLAAGDTFRAAAREQLQAWGERNNVTVISQTTGDSAAVCFDAVQAAKARGIDIVLADTAGRLPTQLHLMEEIKKVKRVLQKAMPDAPHEIIVVLDANIGQNAVNQVKAFDDALGLTGLIVTKLDGTAKGGILAALASDRPVPVRYIGVGEGIDDLRPFDARAFVDALLD.

A compositionally biased stretch (basic residues) spans 1-10 (MFSFFRRKKK). The disordered stretch occupies residues 1-22 (MFSFFRRKKKQETPAPEEAQIQ). GTP contacts are provided by residues 228–235 (GINGAGKT), 309–313 (DTAGR), and 373–376 (TKLD).

This sequence belongs to the GTP-binding SRP family. FtsY subfamily. As to quaternary structure, part of the signal recognition particle protein translocation system, which is composed of SRP and FtsY. SRP is a ribonucleoprotein composed of Ffh and a 4.5S RNA molecule.

The protein resides in the cell membrane. It is found in the cytoplasm. The catalysed reaction is GTP + H2O = GDP + phosphate + H(+). Involved in targeting and insertion of nascent membrane proteins into the cytoplasmic membrane. Acts as a receptor for the complex formed by the signal recognition particle (SRP) and the ribosome-nascent chain (RNC). Interaction with SRP-RNC leads to the transfer of the RNC complex to the Sec translocase for insertion into the membrane, the hydrolysis of GTP by both Ffh and FtsY, and the dissociation of the SRP-FtsY complex into the individual components. The chain is Signal recognition particle receptor FtsY from Neisseria meningitidis serogroup C.